A 1153-amino-acid chain; its full sequence is Nitric oxide synthase (1153 aa).

Ser3 lines the (6R)-L-erythro-5,6,7,8-tetrahydrobiopterin pocket. Heme b is bound at residue Cys82. The L-arginine site is built by Gln145, Trp254, and Asn264. Residue Phe358 participates in (6R)-L-erythro-5,6,7,8-tetrahydrobiopterin binding. Residues 397-417 (PKRKLGFKALARAVEFSASLM) are calmodulin-binding. In terms of domain architecture, Flavodoxin-like spans 427–610 (CSIFYATETG…SFRAWSEEVF (184 aa)). Residue 556-587 (VFGLGSKAYPYYAAYGKYIYLMLQELGAERLV) participates in FMN binding. The FAD-binding FR-type domain occupies 660 to 903 (KEVMPLILAE…LRSAPHFHLP (244 aa)). Residues 697-708 (YAPGDHVAIFPA) and 836-846 (LQPRYYSISSS) contribute to the FAD site. 911–929 (IMIGPGSGIAPFRSFWQQR) contacts NADP(+). Repeat copies occupy residues 934-940 (ENTMPSC), 941-947 (ENTMLSC), 948-954 (ETTIPSC), 955-961 (ENSMPSC), 962-968 (ENTMPSC), 969-975 (ENTMPSC), 976-982 (ENTIPSC), 983-989 (ENTIPSC), 990-996 (ENTMPSC), 997-1003 (ENTIPSW), and 1004-1010 (ERTMQPC). Residues 934-1010 (ENTMPSCENT…PSWERTMQPC (77 aa)) form an 11 X 7 AA tandem repeats of E-[NTR]-[ST]-[IM]-[PLQ]-[SP]-[CW] region. Residue 1089-1104 (GGHFYVSGDVSMAHDV) coordinates NADP(+).

Belongs to the NOS family. Heme b serves as cofactor. It depends on FAD as a cofactor. FMN is required as a cofactor. In terms of tissue distribution, expressed in the central nervous system, in the serotonergic cerebral giant cells. The isoform Long and isoform Short are expressed equally in the CNS.

It catalyses the reaction 2 L-arginine + 3 NADPH + 4 O2 + H(+) = 2 L-citrulline + 2 nitric oxide + 3 NADP(+) + 4 H2O. Stimulated by calcium/calmodulin. In terms of biological role, produces nitric oxide (NO) which is a messenger molecule with diverse functions throughout the body. The protein is Nitric oxide synthase (NOS) of Lymnaea stagnalis (Great pond snail).